The sequence spans 689 residues: Beta-adrenergic receptor kinase 1 (689 aa).

The segment at 1–190 is N-terminal; that stretch reads MADLEAVLAD…ELNIHLTMND (190 aa). The region spanning 54-175 is the RGS domain; sequence TFEKIFSQKL…IESDKFTRFC (122 aa). Residues 191-453 form the Protein kinase domain; sequence FSVHRIIGRG…AQEVKESPFF (263 aa). ATP is bound by residues 197–205 and Lys-220; that span reads IGRGGFGEV. The active-site Proton acceptor is Asp-317. The region spanning 454-521 is the AGC-kinase C-terminal domain; that stretch reads RSLDWQMVFL…TISERWQQEV (68 aa). Residues 558–652 form the PH domain; sequence DCIMHGYMSK…WKKELRDAYR (95 aa). At Ser-670 the chain carries Phosphoserine.

It belongs to the protein kinase superfamily. AGC Ser/Thr protein kinase family. GPRK subfamily. As to quaternary structure, interacts with the heterodimer formed by GNB1 and GNG2. Interacts with GIT1. Interacts with, and phosphorylates chemokine-stimulated CCR5. Interacts with ARRB1. Interacts with LPAR1 and LPAR2. Interacts with RALA in response to LPAR1 activation. ADRBK1 and RALA mutually inhibit each other's binding to LPAR1. Interacts with ADRB2.

The protein localises to the cytoplasm. The protein resides in the cell membrane. It is found in the postsynapse. Its subcellular location is the presynapse. It carries out the reaction [beta-adrenergic receptor] + ATP = [beta-adrenergic receptor]-phosphate + ADP + H(+). In contrast to other AGC family kinases, the catalytic activity is solely regulated by the binding of substrates and ligands, not by phosphorylation of the kinase domain. Its function is as follows. Specifically phosphorylates the agonist-occupied form of the beta-adrenergic and closely related receptors, probably inducing a desensitization of them. Key regulator of LPAR1 signaling. Competes with RALA for binding to LPAR1 thus affecting the signaling properties of the receptor. Desensitizes LPAR1 and LPAR2 in a phosphorylation-independent manner. Positively regulates ciliary smoothened (SMO)-dependent Hedgehog (Hh) signaling pathway by facilitating the trafficking of SMO into the cilium and the stimulation of SMO activity. Inhibits relaxation of airway smooth muscle in response to blue light. The chain is Beta-adrenergic receptor kinase 1 from Mesocricetus auratus (Golden hamster).